Here is a 540-residue protein sequence, read N- to C-terminus: Glucose-6-phosphate isomerase (540 aa).

Glu-350 functions as the Proton donor in the catalytic mechanism. Residues His-381 and Lys-503 contribute to the active site.

It belongs to the GPI family.

The protein resides in the cytoplasm. It carries out the reaction alpha-D-glucose 6-phosphate = beta-D-fructose 6-phosphate. It functions in the pathway carbohydrate biosynthesis; gluconeogenesis. The protein operates within carbohydrate degradation; glycolysis; D-glyceraldehyde 3-phosphate and glycerone phosphate from D-glucose: step 2/4. Its function is as follows. Catalyzes the reversible isomerization of glucose-6-phosphate to fructose-6-phosphate. In Burkholderia ambifaria (strain MC40-6), this protein is Glucose-6-phosphate isomerase.